The chain runs to 506 residues: Tripartite terminase subunit 3 (506 aa).

Glu128 functions as the For ATPase activity in the catalytic mechanism. Catalysis depends on for nuclease activity residues Asp282, Glu354, and Asp475.

This sequence belongs to the herpesviridae TRM3 protein family. Interacts with the terminase subunits TRM1 and TRM2. Interacts with portal protein.

It is found in the host nucleus. Component of the molecular motor that translocates viral genomic DNA in empty capsid during DNA packaging. Forms a tripartite terminase complex together with TRM1 and TRM2 in the host cytoplasm. Once the complex reaches the host nucleus, it interacts with the capsid portal vertex. This portal forms a ring in which genomic DNA is translocated into the capsid. TRM3 carries an RNase H-like nuclease activity that plays an important role for the cleavage of concatemeric viral DNA into unit length genomes. The chain is Tripartite terminase subunit 3 from Amazona oratrix (yellow-headed parrot).